We begin with the raw amino-acid sequence, 390 residues long: NADH-quinone oxidoreductase subunit D (390 aa).

The protein belongs to the complex I 49 kDa subunit family. In terms of assembly, NDH-1 is composed of 14 different subunits. Subunits NuoB, C, D, E, F, and G constitute the peripheral sector of the complex.

Its subcellular location is the cell membrane. It catalyses the reaction a quinone + NADH + 5 H(+)(in) = a quinol + NAD(+) + 4 H(+)(out). In terms of biological role, NDH-1 shuttles electrons from NADH, via FMN and iron-sulfur (Fe-S) centers, to quinones in the respiratory chain. The immediate electron acceptor for the enzyme in this species is believed to be ubiquinone. Couples the redox reaction to proton translocation (for every two electrons transferred, four hydrogen ions are translocated across the cytoplasmic membrane), and thus conserves the redox energy in a proton gradient. The protein is NADH-quinone oxidoreductase subunit D of Wolbachia sp. subsp. Brugia malayi (strain TRS).